The following is a 203-amino-acid chain: ATP-dependent Clp protease proteolytic subunit 1 (203 aa).

Catalysis depends on serine 102, which acts as the Nucleophile. Residue histidine 127 is part of the active site.

This sequence belongs to the peptidase S14 family. As to quaternary structure, fourteen ClpP subunits assemble into 2 heptameric rings which stack back to back to give a disk-like structure with a central cavity, resembling the structure of eukaryotic proteasomes.

Its subcellular location is the cytoplasm. It carries out the reaction Hydrolysis of proteins to small peptides in the presence of ATP and magnesium. alpha-casein is the usual test substrate. In the absence of ATP, only oligopeptides shorter than five residues are hydrolyzed (such as succinyl-Leu-Tyr-|-NHMec, and Leu-Tyr-Leu-|-Tyr-Trp, in which cleavage of the -Tyr-|-Leu- and -Tyr-|-Trp bonds also occurs).. Functionally, cleaves peptides in various proteins in a process that requires ATP hydrolysis. Has a chymotrypsin-like activity. Plays a major role in the degradation of misfolded proteins. This is ATP-dependent Clp protease proteolytic subunit 1 from Rhizobium johnstonii (strain DSM 114642 / LMG 32736 / 3841) (Rhizobium leguminosarum bv. viciae).